The primary structure comprises 870 residues: UvrABC system protein B (870 aa).

Residues 20-410 (EGVDNNDRTQ…VFAEQVIRPT (391 aa)) form the Helicase ATP-binding domain. 33–40 (GVTGSGKT) serves as a coordination point for ATP. Positions 86–109 (YYDYYQPEAYVPRTDTFIEKESSI) match the Beta-hairpin motif. In terms of domain architecture, Helicase C-terminal spans 425-591 (QVDDVVGEIR…SVKSRISDIL (167 aa)). The region spanning 620-655 (KAHLDAMEKQMRDAAANLDFEKAARIRDEIKRLREM) is the UVR domain. 2 disordered regions span residues 671–698 (ESPV…QERF) and 741–870 (AKPS…RPGK). Basic residues predominate over residues 679-689 (KGKHNKGVAKH). Composition is skewed to basic and acidic residues over residues 793–808 (NSLD…KPVE) and 827–836 (TDVKDRDDSA). Residues 858 to 870 (EKRRPGKTGRPGK) are compositionally biased toward basic residues.

It belongs to the UvrB family. In terms of assembly, forms a heterotetramer with UvrA during the search for lesions. Interacts with UvrC in an incision complex.

It is found in the cytoplasm. Functionally, the UvrABC repair system catalyzes the recognition and processing of DNA lesions. A damage recognition complex composed of 2 UvrA and 2 UvrB subunits scans DNA for abnormalities. Upon binding of the UvrA(2)B(2) complex to a putative damaged site, the DNA wraps around one UvrB monomer. DNA wrap is dependent on ATP binding by UvrB and probably causes local melting of the DNA helix, facilitating insertion of UvrB beta-hairpin between the DNA strands. Then UvrB probes one DNA strand for the presence of a lesion. If a lesion is found the UvrA subunits dissociate and the UvrB-DNA preincision complex is formed. This complex is subsequently bound by UvrC and the second UvrB is released. If no lesion is found, the DNA wraps around the other UvrB subunit that will check the other stand for damage. In Mesorhizobium japonicum (strain LMG 29417 / CECT 9101 / MAFF 303099) (Mesorhizobium loti (strain MAFF 303099)), this protein is UvrABC system protein B.